We begin with the raw amino-acid sequence, 409 residues long: Putative competence-damage inducible protein (409 aa).

This sequence belongs to the CinA family.

The chain is Putative competence-damage inducible protein from Clostridium tetani (strain Massachusetts / E88).